We begin with the raw amino-acid sequence, 251 residues long: 3-deoxy-manno-octulosonate cytidylyltransferase (251 aa).

Belongs to the KdsB family.

The protein localises to the cytoplasm. The enzyme catalyses 3-deoxy-alpha-D-manno-oct-2-ulosonate + CTP = CMP-3-deoxy-beta-D-manno-octulosonate + diphosphate. It functions in the pathway nucleotide-sugar biosynthesis; CMP-3-deoxy-D-manno-octulosonate biosynthesis; CMP-3-deoxy-D-manno-octulosonate from 3-deoxy-D-manno-octulosonate and CTP: step 1/1. Its pathway is bacterial outer membrane biogenesis; lipopolysaccharide biosynthesis. Activates KDO (a required 8-carbon sugar) for incorporation into bacterial lipopolysaccharide in Gram-negative bacteria. The protein is 3-deoxy-manno-octulosonate cytidylyltransferase of Vibrio vulnificus (strain YJ016).